We begin with the raw amino-acid sequence, 377 residues long: Gap junction gamma-1 protein (377 aa).

Topologically, residues 1–18 are cytoplasmic; the sequence is MSWSFLTRLLEEINNHST. A helical membrane pass occupies residues 19-39; the sequence is FVGKVWLTVLIIFRIVLTAVG. Residues 40–75 lie on the Extracellular side of the membrane; it reads GESIYYDEQSKFTCNTQQPGCENVCYDAFAPLSHVR. Residues 76–96 form a helical membrane-spanning segment; that stretch reads FWVFQIILITTPSIMYLGFAM. Over 97–174 the chain is Cytoplasmic; the sequence is HRIARQPEMQ…RRIKQDGLMK (78 aa). The disordered stretch occupies residues 129-163; that stretch reads DYEEAEDNQEEDPMICEEEEPEKDSEKGDKKKHDG. A compositionally biased stretch (acidic residues) spans 131-151; it reads EEAEDNQEEDPMICEEEEPEK. Residues 175–197 form a helical membrane-spanning segment; the sequence is VYVLQLLFRSVFEVGFLMGQYIL. At 198–228 the chain is on the extracellular side; it reads YGFEVIPFFVCSRKPCPHTVDCFVSRPTEKT. Residues 229–249 form a helical membrane-spanning segment; it reads IFLLIMYAVSALCLFLNLCEL. Over 250 to 377 the chain is Cytoplasmic; it reads FHLGIGGIRD…GVGNREKSGL (128 aa). 2 disordered regions span residues 265–294 and 334–377; these read KKEL…LPNG and LNPT…KSGL. Positions 337-362 are enriched in polar residues; the sequence is TGDNTHASRSSSPESNSIAAEQNRLN.

The protein belongs to the connexin family. Gamma-type subfamily. A connexon is composed of a hexamer of connexins.

The protein resides in the cell membrane. It is found in the cell junction. It localises to the gap junction. One gap junction consists of a cluster of closely packed pairs of transmembrane channels, the connexons, through which materials of low MW diffuse from one cell to a neighboring cell. The polypeptide is Gap junction gamma-1 protein (gjc1) (Xenopus tropicalis (Western clawed frog)).